The primary structure comprises 552 residues: Probable bifunctional methylthioribose-1-phosphate isomerase/methylthioribulose-1-phosphate dehydratase (552 aa).

The interval 1–333 is methylthioribose-1-phosphate isomerase activity; the sequence is MRPIDDSSLT…VVTEHGVVHG (333 aa). Substrate-binding positions include 49–51, arginine 91, and glutamine 195; that span reads RGA. The active-site Proton donor is the aspartate 236. Residue 246–247 participates in substrate binding; sequence NK. Residues 334–535 are methylthioribulose-1-phosphate dehydratase activity; sequence TVAAEPGARI…AVCELVLRTG (202 aa). Positions 427 and 429 each coordinate Zn(2+).

In the N-terminal section; belongs to the eIF-2B alpha/beta/delta subunits family. MtnA subfamily. The protein in the C-terminal section; belongs to the aldolase class II family. MtnB subfamily. The cofactor is Zn(2+).

It carries out the reaction 5-(methylsulfanyl)-alpha-D-ribose 1-phosphate = 5-(methylsulfanyl)-D-ribulose 1-phosphate. It catalyses the reaction 5-(methylsulfanyl)-D-ribulose 1-phosphate = 5-methylsulfanyl-2,3-dioxopentyl phosphate + H2O. Its pathway is amino-acid biosynthesis; L-methionine biosynthesis via salvage pathway; L-methionine from S-methyl-5-thio-alpha-D-ribose 1-phosphate: step 1/6. It functions in the pathway amino-acid biosynthesis; L-methionine biosynthesis via salvage pathway; L-methionine from S-methyl-5-thio-alpha-D-ribose 1-phosphate: step 2/6. Its function is as follows. Bifunctional protein that catalyzes the interconversion of methylthioribose-1-phosphate (MTR-1-P) into methylthioribulose-1-phosphate (MTRu-1-P), and the dehydration of methylthioribulose-1-phosphate (MTRu-1-P) into 2,3-diketo-5-methylthiopentyl-1-phosphate (DK-MTP-1-P). The protein is Probable bifunctional methylthioribose-1-phosphate isomerase/methylthioribulose-1-phosphate dehydratase (mtnAB) of Nocardia farcinica (strain IFM 10152).